A 181-amino-acid polypeptide reads, in one-letter code: Translation initiation factor IF-3 (181 aa).

Belongs to the IF-3 family. Monomer.

The protein localises to the cytoplasm. Its function is as follows. IF-3 binds to the 30S ribosomal subunit and shifts the equilibrium between 70S ribosomes and their 50S and 30S subunits in favor of the free subunits, thus enhancing the availability of 30S subunits on which protein synthesis initiation begins. In Mycoplasma mycoides subsp. mycoides SC (strain CCUG 32753 / NCTC 10114 / PG1), this protein is Translation initiation factor IF-3.